A 210-amino-acid chain; its full sequence is Glutathione S-transferase-like protein FUS3 (210 aa).

Positions 1–74 (MPNARVFKIL…YVAQSGPQAS (74 aa)) constitute a GST N-terminal domain. Residues 80-206 (DAMSSAKIRQ…GKPNFIEKRR (127 aa)) enclose the GST C-terminal domain.

This sequence belongs to the GST superfamily.

Glutathione S-transferase-like protein; part of the gene cluster that mediates the biosynthesis of the mycotoxin fusarin C. Within the cluster, FUS1, FUS2, FUS8 and FUS9 are sufficient for fusarin production. The other FUS cluster members are not essential for fusarin C biosynthesis. This chain is Glutathione S-transferase-like protein FUS3, found in Gibberella fujikuroi (strain CBS 195.34 / IMI 58289 / NRRL A-6831) (Bakanae and foot rot disease fungus).